A 142-amino-acid polypeptide reads, in one-letter code: Large ribosomal subunit protein uL13 (142 aa).

It belongs to the universal ribosomal protein uL13 family. Part of the 50S ribosomal subunit.

In terms of biological role, this protein is one of the early assembly proteins of the 50S ribosomal subunit, although it is not seen to bind rRNA by itself. It is important during the early stages of 50S assembly. This Burkholderia mallei (strain NCTC 10247) protein is Large ribosomal subunit protein uL13.